The primary structure comprises 268 residues: Glutamate racemase (268 aa).

Residues 14–15 and 46–47 each bind substrate; these read DS and YG. Cys78 functions as the Proton donor/acceptor in the catalytic mechanism. 79-80 provides a ligand contact to substrate; that stretch reads NS. The active-site Proton donor/acceptor is Cys190. 191 to 192 serves as a coordination point for substrate; the sequence is TH.

This sequence belongs to the aspartate/glutamate racemases family.

The catalysed reaction is L-glutamate = D-glutamate. The protein operates within cell wall biogenesis; peptidoglycan biosynthesis. Its function is as follows. Provides the (R)-glutamate required for cell wall biosynthesis. The sequence is that of Glutamate racemase from Treponema pallidum (strain Nichols).